We begin with the raw amino-acid sequence, 48 residues long: Small ribosomal subunit protein uS14 (48 aa).

The Zn(2+) site is built by cysteine 13, cysteine 16, cysteine 31, and cysteine 34.

The protein belongs to the universal ribosomal protein uS14 family. Zinc-binding uS14 subfamily. Part of the 30S ribosomal subunit. The cofactor is Zn(2+).

Binds 16S rRNA, required for the assembly of 30S particles. This is Small ribosomal subunit protein uS14 from Methanopyrus kandleri (strain AV19 / DSM 6324 / JCM 9639 / NBRC 100938).